Reading from the N-terminus, the 172-residue chain is L-amino acid N-acyltransferase MnaT (172 aa).

Residues 1-163 (MSIRFARKAD…DLTFMQLQLD (163 aa)) form the N-acetyltransferase domain. Acetyl-CoA-binding positions include 85 to 87 (VYV), 93 to 98 (GKGLGR), N124, and S133.

Belongs to the acetyltransferase family. PAT/BAR subfamily.

The catalysed reaction is L-methionine + acetyl-CoA = N-acetyl-L-methionine + CoA + H(+). It catalyses the reaction propanoyl-CoA + L-methionine = N-propanoyl-L-methioninate + CoA + H(+). The enzyme catalyses L-alpha-phenylglycine + acetyl-CoA = N-acetyl-L-alpha-phenylglycine + CoA + H(+). It carries out the reaction L-methionine sulfoximine + acetyl-CoA = N-acetyl-L-methionine sulfoximine + CoA + H(+). The catalysed reaction is L-methionine sulfone + acetyl-CoA = N-acetyl-L-methionine sulfone + CoA + H(+). Functionally, acyltransferase that appears to be required for E.coli optimal growth rate and yield via the formation of N-acetylated amino acids. Catalyzes the acylation of L-methionine using acetyl-CoA or propanoyl-CoA as acyl donors, and the acetylation of L-phenylglycine. Is also able to N-acylate other free L-amino acids and their derivatives using a CoA thioester as cosubstrate. Using acetyl-CoA as an acyl donor, substrate specificity is methionine sulfone &gt; methionine sulfoximine &gt; methionine sulfoxide &gt; methionine. Asparagine, lysine, glutamine, aspartate and glutamate are very poor substrates. Using methionine as a substrate, acyl donor preference is propanoyl-CoA &gt; acetyl-CoA &gt;&gt; butyryl-CoA. Likely plays a role in the resistance against the toxic effects of L-methionine sulfoximine (MSX), via its ability to catalyze its acetylation; MSX is a rare amino acid which inhibits glutamine synthetase (GlnA). This chain is L-amino acid N-acyltransferase MnaT, found in Escherichia coli (strain K12).